The primary structure comprises 251 residues: uncharacterized protein (251 aa).

The first 25 residues, 1 to 25, serve as a signal peptide directing secretion; it reads MRKKKFLSRFSFSSLFLLCGTLLSA. Cysteine 26 carries the N-palmitoyl cysteine lipid modification. The S-diacylglycerol cysteine moiety is linked to residue cysteine 26.

This sequence belongs to the MG439/MG440 family.

It is found in the cell membrane. This is an uncharacterized protein from Mycoplasma pneumoniae (strain ATCC 29342 / M129 / Subtype 1) (Mycoplasmoides pneumoniae).